Here is a 421-residue protein sequence, read N- to C-terminus: 4-hydroxy-3-methylbut-2-en-1-yl diphosphate synthase (flavodoxin) (421 aa).

Positions 311, 314, 357, and 364 each coordinate [4Fe-4S] cluster.

The protein belongs to the IspG family. Requires [4Fe-4S] cluster as cofactor.

It catalyses the reaction (2E)-4-hydroxy-3-methylbut-2-enyl diphosphate + oxidized [flavodoxin] + H2O + 2 H(+) = 2-C-methyl-D-erythritol 2,4-cyclic diphosphate + reduced [flavodoxin]. The protein operates within isoprenoid biosynthesis; isopentenyl diphosphate biosynthesis via DXP pathway; isopentenyl diphosphate from 1-deoxy-D-xylulose 5-phosphate: step 5/6. Converts 2C-methyl-D-erythritol 2,4-cyclodiphosphate (ME-2,4cPP) into 1-hydroxy-2-methyl-2-(E)-butenyl 4-diphosphate. The chain is 4-hydroxy-3-methylbut-2-en-1-yl diphosphate synthase (flavodoxin) from Xanthomonas euvesicatoria pv. vesicatoria (strain 85-10) (Xanthomonas campestris pv. vesicatoria).